A 470-amino-acid chain; its full sequence is Poly(A) polymerase catalytic subunit (470 aa).

Catalysis depends on residues Asp192 and Asp194.

It belongs to the poxviridae poly(A) polymerase catalytic subunit family. Heterodimer of a large (catalytic) subunit and a small (regulatory) subunit.

It catalyses the reaction RNA(n) + ATP = RNA(n)-3'-adenine ribonucleotide + diphosphate. In terms of biological role, polymerase that creates the 3'-poly(A) tail of mRNA's. In Sus scrofa (Pig), this protein is Poly(A) polymerase catalytic subunit (PAPL).